The following is a 341-amino-acid chain: uncharacterized protein (341 aa).

Positions 153 to 179 form a coiled coil; the sequence is AYTLSEKVMNAEREAEETRETIIREAH. Polar residues predominate over residues 319–335; it reads EQLQNPAPESAPSTSKT. A disordered region spans residues 319–341; the sequence is EQLQNPAPESAPSTSKTLRSKNP.

This is an uncharacterized protein from Coxiella burnetii (strain RSA 493 / Nine Mile phase I).